The sequence spans 364 residues: Sulfate/thiosulfate import ATP-binding protein CysA (364 aa).

The 235-residue stretch at 3 to 237 (IEIARIKKSF…PATRFVLEFM (235 aa)) folds into the ABC transporter domain. 35–42 (GPSGSGKT) is a binding site for ATP.

The protein belongs to the ABC transporter superfamily. Sulfate/tungstate importer (TC 3.A.1.6) family. As to quaternary structure, the complex is composed of two ATP-binding proteins (CysA), two transmembrane proteins (CysT and CysW) and a solute-binding protein (CysP).

The protein localises to the cell inner membrane. It carries out the reaction sulfate(out) + ATP + H2O = sulfate(in) + ADP + phosphate + H(+). The enzyme catalyses thiosulfate(out) + ATP + H2O = thiosulfate(in) + ADP + phosphate + H(+). In terms of biological role, part of the ABC transporter complex CysAWTP involved in sulfate/thiosulfate import. Responsible for energy coupling to the transport system. The sequence is that of Sulfate/thiosulfate import ATP-binding protein CysA from Salmonella typhi.